Consider the following 513-residue polypeptide: Flavonoid 3',5'-hydroxylase (513 aa).

Cysteine 446 lines the heme pocket.

Belongs to the cytochrome P450 family. It depends on heme as a cofactor. In terms of tissue distribution, hypocotyl tissues.

The catalysed reaction is a 3',5'-unsubstituted flavanone + 2 reduced [NADPH--hemoprotein reductase] + 2 O2 = a 3',5'-dihydroxyflavanone + 2 oxidized [NADPH--hemoprotein reductase] + 2 H2O + 2 H(+). It participates in pigment biosynthesis; anthocyanin biosynthesis. Its function is as follows. Catalyzes the 3'5'-hydroxylation of naringenin and eriodictyol to form 5,7,3,'4',5'-pentahydroxyflavanone and 3',5'-hydroxylation of dihydrokaempferol and dihydroquercetin to form dihydromyricetin. This chain is Flavonoid 3',5'-hydroxylase (CYP75A2), found in Solanum melongena (Eggplant).